A 125-amino-acid chain; its full sequence is NADPH-dependent 7-cyano-7-deazaguanine reductase (125 aa).

Cysteine 41 serves as the catalytic Thioimide intermediate. Aspartate 48 functions as the Proton donor in the catalytic mechanism. Substrate contacts are provided by residues 63 to 65 and 82 to 83; these read IEL and HE.

It belongs to the GTP cyclohydrolase I family. QueF type 1 subfamily.

It localises to the cytoplasm. It carries out the reaction 7-aminomethyl-7-carbaguanine + 2 NADP(+) = 7-cyano-7-deazaguanine + 2 NADPH + 3 H(+). Its pathway is tRNA modification; tRNA-queuosine biosynthesis. Catalyzes the NADPH-dependent reduction of 7-cyano-7-deazaguanine (preQ0) to 7-aminomethyl-7-deazaguanine (preQ1). In Sulfurovum sp. (strain NBC37-1), this protein is NADPH-dependent 7-cyano-7-deazaguanine reductase.